Reading from the N-terminus, the 281-residue chain is Ribosomal RNA large subunit methyltransferase J (281 aa).

S-adenosyl-L-methionine is bound by residues H19, H42, S101, E119, 144 to 145 (NG), and D165. D165 (proton acceptor) is an active-site residue.

Belongs to the RlmJ family. In terms of assembly, monomer.

It carries out the reaction adenosine(2030) in 23S rRNA + S-adenosyl-L-methionine = N(6)-methyladenosine(2030) in 23S rRNA + S-adenosyl-L-homocysteine + H(+). Functionally, specifically methylates the adenine in position 2030 of 23S rRNA. The polypeptide is Ribosomal RNA large subunit methyltransferase J (Haemophilus influenzae (strain ATCC 51907 / DSM 11121 / KW20 / Rd)).